Here is a 193-residue protein sequence, read N- to C-terminus: Ion-translocating oxidoreductase complex subunit A (193 aa).

6 helical membrane-spanning segments follow: residues 5-25, 47-67, 72-92, 102-122, 134-154, and 171-191; these read LLLFIGTVLVNNFVLVKFLGL, FVITLASICAWLVNHLILLPL, LRTMAYILVIAVVVQFTEMVV, LLGIFLPLITTNCAVLGVPLL, AIYGFSASIGFSLVMVLFAGV, and SIALVTAGLMALAFMGFAGLV.

Belongs to the NqrDE/RnfAE family. As to quaternary structure, the complex is composed of six subunits: RnfA, RnfB, RnfC, RnfD, RnfE and RnfG.

It localises to the cell inner membrane. Its function is as follows. Part of a membrane-bound complex that couples electron transfer with translocation of ions across the membrane. This is Ion-translocating oxidoreductase complex subunit A from Erwinia tasmaniensis (strain DSM 17950 / CFBP 7177 / CIP 109463 / NCPPB 4357 / Et1/99).